A 741-amino-acid chain; its full sequence is MAKQTFEMTFEGRPLVVEVGQVAKQANGAVVVRYGDTTVLSVAVMSKKMATADFFPLQVNYEEKMYAAGKFPGGFSKREGRPSTDATLTARLIDRPIRPMFAEGFRNEVQVINTVLSYDENASAPMAAMFGSSLALSISDIPFNGPIAGVQVAYAAEDFIINPSASDKEVSHLDLIVAGTKEAINMVEAGAQELSEDIMLQALLKGHEAIQELVDFQNYIVAAVGKEKAEVELFQVNADLKAEIEAVYYDQLAKAVQVEEKLAREAATKAVKEEVLASYQERFAEDEDKETILRDVVEILEQMEHAEVRRLITEDKVRPDGRRVDEIRPLDAEIDFLPKVHGSGLFTRGQTQALSVLTLAPMSDTQLVDGLDPEYKKRFLHHYNFPQYSVGKTGRYGAPGRREIGHGVLGERALAQVLPSVEEFPYAIRLVAEVLESNGSSSQASICAGTLALMAGGVPIKAPVAGIAMGLISDGTNYTVLTDIQGLEDHFGDMDFKVAGTRLGITALQMDIKISGITPAILEEALAQAKVARFEILDVIESAIAEPRSELAPTAPKIDSIQIPVDKIKVVIGKGGETIDKIIAETGVTIDIDEEGLVQIFSSDQDAIDRAKTIISDLVREAKVGEVYTVPVVRIEKFGAFVHLFNKTDALVHISELAWKHTEHVEDVVKVGDMVTVKIIKIDEKGRVDASIKTLLPKPEKNEDGENGEEHRHCCCSHHKPDHHSESMEAPKKSDESETKE.

Residues Asp-489 and Asp-495 each contribute to the Mg(2+) site. The 60-residue stretch at 556 to 615 (PKIDSIQIPVDKIKVVIGKGGETIDKIIAETGVTIDIDEEGLVQIFSSDQDAIDRAKTII) folds into the KH domain. The S1 motif domain occupies 625-693 (GEVYTVPVVR…EKGRVDASIK (69 aa)). The interval 696-741 (LPKPEKNEDGENGEEHRHCCCSHHKPDHHSESMEAPKKSDESETKE) is disordered. 2 stretches are compositionally biased toward basic and acidic residues: residues 698 to 713 (KPEKNEDGENGEEHRH) and 723 to 741 (HHSESMEAPKKSDESETKE).

It belongs to the polyribonucleotide nucleotidyltransferase family. It depends on Mg(2+) as a cofactor.

It localises to the cytoplasm. The catalysed reaction is RNA(n+1) + phosphate = RNA(n) + a ribonucleoside 5'-diphosphate. Functionally, involved in mRNA degradation. Catalyzes the phosphorolysis of single-stranded polyribonucleotides processively in the 3'- to 5'-direction. The chain is Polyribonucleotide nucleotidyltransferase from Streptococcus thermophilus (strain ATCC BAA-491 / LMD-9).